A 206-amino-acid polypeptide reads, in one-letter code: Regulator of rDNA transcription 14 (206 aa).

The segment at 178–206 is disordered; sequence FVKDHRYPGLTPGLAPVGLSDEEDSSEED. Phosphoserine occurs at positions 197, 202, and 203. Acidic residues predominate over residues 197–206; it reads SDEEDSSEED.

It belongs to the RRT14 family.

It is found in the nucleus. Its subcellular location is the nucleolus. Functionally, involved in ribosome biogenesis, probably through modulation of rDNA transcription. This Saccharomyces cerevisiae (strain RM11-1a) (Baker's yeast) protein is Regulator of rDNA transcription 14 (RRT14).